Here is a 478-residue protein sequence, read N- to C-terminus: tRNA modification GTPase MnmE (478 aa).

Positions 25, 82, and 135 each coordinate (6S)-5-formyl-5,6,7,8-tetrahydrofolate. Residues 231–400 (GIKVVIAGQP…LRQRLLQVVG (170 aa)) form the TrmE-type G domain. Asparagine 241 is a K(+) binding site. Residues 241–246 (NAGKSS), 260–266 (TPIAGTT), and 285–288 (DTAG) each bind GTP. Mg(2+) is bound at residue serine 245. Threonine 260, isoleucine 262, and threonine 265 together coordinate K(+). Mg(2+) is bound at residue threonine 266. (6S)-5-formyl-5,6,7,8-tetrahydrofolate is bound at residue lysine 478.

It belongs to the TRAFAC class TrmE-Era-EngA-EngB-Septin-like GTPase superfamily. TrmE GTPase family. In terms of assembly, homodimer. Heterotetramer of two MnmE and two MnmG subunits. K(+) is required as a cofactor.

It is found in the cytoplasm. Functionally, exhibits a very high intrinsic GTPase hydrolysis rate. Involved in the addition of a carboxymethylaminomethyl (cmnm) group at the wobble position (U34) of certain tRNAs, forming tRNA-cmnm(5)s(2)U34. The chain is tRNA modification GTPase MnmE from Polaromonas sp. (strain JS666 / ATCC BAA-500).